The sequence spans 394 residues: Elongation factor Tu (394 aa).

A tr-type G domain is found at 10–204 (KPHVNVGTIG…ALDTYIPEPE (195 aa)). A G1 region spans residues 19-26 (GHVDHGKT). 19-26 (GHVDHGKT) provides a ligand contact to GTP. Position 26 (Thr26) interacts with Mg(2+). The G2 stretch occupies residues 60–64 (GITIN). Residues 81-84 (DCPG) form a G3 region. Residues 81-85 (DCPGH) and 136-139 (NKCD) each bind GTP. The segment at 136-139 (NKCD) is G4. Positions 174–176 (SAL) are G5.

It belongs to the TRAFAC class translation factor GTPase superfamily. Classic translation factor GTPase family. EF-Tu/EF-1A subfamily. As to quaternary structure, monomer.

It localises to the cytoplasm. It carries out the reaction GTP + H2O = GDP + phosphate + H(+). Its function is as follows. GTP hydrolase that promotes the GTP-dependent binding of aminoacyl-tRNA to the A-site of ribosomes during protein biosynthesis. The chain is Elongation factor Tu from Shewanella halifaxensis (strain HAW-EB4).